We begin with the raw amino-acid sequence, 189 residues long: Large ribosomal subunit protein bL17 (189 aa).

Residues 136 to 189 (KAAPAAEEEVVETEEAPAVEAEAAESEEAPAAEAEAAEAEAAETEEAPAAEDKK) form a disordered region. Positions 141–189 (AEEEVVETEEAPAVEAEAAESEEAPAAEAEAAEAEAAETEEAPAAEDKK) are enriched in acidic residues.

This sequence belongs to the bacterial ribosomal protein bL17 family. As to quaternary structure, part of the 50S ribosomal subunit. Contacts protein L32.

This chain is Large ribosomal subunit protein bL17, found in Paenarthrobacter aurescens (strain TC1).